Reading from the N-terminus, the 236-residue chain is MTKKYWNINLEDMLEARVHLGHSTQNWNPKMAPYISAKRKGIHIINLTRTARFLSEACDLVFYAASKGKKFLIVGTNNAADEAVARASKRARCHYVNKKWLGGMLTNWSTTETRLQKFRDLRMEQKKGGLNNLPKKEATMLKRKLARLQKYLGGIQYMTGLPDIVIIIDQHKEYTALQECRILGIPTISLIDTNCDPNLSDIAIPANDDAMASIRFILNKLVFAICQGYFSDLRKP.

Belongs to the universal ribosomal protein uS2 family.

Its subcellular location is the plastid. In Cuscuta gronovii (Common dodder), this protein is Small ribosomal subunit protein uS2c (rps2).